Reading from the N-terminus, the 209-residue chain is Nascent polypeptide-associated complex subunit alpha (209 aa).

Positions Met1–Glu21 are enriched in basic and acidic residues. Disordered regions lie at residues Met1–Asn51 and Gln121–Ile175. Residues His22–Gly36 show a composition bias toward acidic residues. The NAC-A/B domain maps to Asn49–Ala114. Residues Ala127–Asp150 are compositionally biased toward basic and acidic residues. Positions Lys151–Asp166 are enriched in acidic residues. Residues Leu170–Ile209 enclose the UBA domain.

It belongs to the NAC-alpha family. Part of the nascent polypeptide-associated complex (NAC), consisting of EGD2 and EGD1. NAC associates with ribosomes via EGD1.

The protein resides in the cytoplasm. Its subcellular location is the nucleus. Its function is as follows. Component of the nascent polypeptide-associated complex (NAC), a dynamic component of the ribosomal exit tunnel, protecting the emerging polypeptides from interaction with other cytoplasmic proteins to ensure appropriate nascent protein targeting. The NAC complex also promotes mitochondrial protein import by enhancing productive ribosome interactions with the outer mitochondrial membrane and blocks the inappropriate interaction of ribosomes translating non-secretory nascent polypeptides with translocation sites in the membrane of the endoplasmic reticulum. EGD2 may also be involved in transcription regulation. The chain is Nascent polypeptide-associated complex subunit alpha (EGD2) from Gibberella zeae (strain ATCC MYA-4620 / CBS 123657 / FGSC 9075 / NRRL 31084 / PH-1) (Wheat head blight fungus).